The chain runs to 332 residues: Ribosomal RNA small subunit methyltransferase C (332 aa).

It belongs to the methyltransferase superfamily. RsmC family. As to quaternary structure, monomer.

It is found in the cytoplasm. It carries out the reaction guanosine(1207) in 16S rRNA + S-adenosyl-L-methionine = N(2)-methylguanosine(1207) in 16S rRNA + S-adenosyl-L-homocysteine + H(+). In terms of biological role, specifically methylates the guanine in position 1207 of 16S rRNA in the 30S particle. The chain is Ribosomal RNA small subunit methyltransferase C from Pseudomonas syringae pv. tomato (strain ATCC BAA-871 / DC3000).